The primary structure comprises 406 residues: 2,3-bisphosphoglycerate-independent phosphoglycerate mutase (406 aa).

Positions 164–184 (VSSNDPKKTGVQPKTIHPDDD) are disordered.

The protein belongs to the BPG-independent phosphoglycerate mutase family. A-PGAM subfamily.

The enzyme catalyses (2R)-2-phosphoglycerate = (2R)-3-phosphoglycerate. The protein operates within carbohydrate degradation; glycolysis; pyruvate from D-glyceraldehyde 3-phosphate: step 3/5. Its function is as follows. Catalyzes the interconversion of 2-phosphoglycerate and 3-phosphoglycerate. The sequence is that of 2,3-bisphosphoglycerate-independent phosphoglycerate mutase from Methanocorpusculum labreanum (strain ATCC 43576 / DSM 4855 / Z).